The chain runs to 789 residues: Isoamylase SU1, chloroplastic (789 aa).

The N-terminal 44 residues, 1–44 (MAQQLPCVSSPRPLLAVPAGRWRAGVRGRPNVAGLGRGRLSLHA), are a transit peptide targeting the chloroplast. Catalysis depends on Asp417, which acts as the Nucleophile. Glu473 functions as the Proton donor in the catalytic mechanism.

This sequence belongs to the glycosyl hydrolase 13 family.

The protein resides in the plastid. Its subcellular location is the chloroplast. The catalysed reaction is Hydrolysis of (1-&gt;6)-alpha-D-glucosidic branch linkages in glycogen, amylopectin and their beta-limit dextrins.. The protein operates within glycan biosynthesis; starch biosynthesis. In terms of biological role, isoamylase starch-debranching enzyme involved in amylopectin biosynthesis in endosperm. Functions by removing excess branches or improper branches that interfere with the formation of double helices of the cluster chains of amylopectin and crystallization of starch. The sequence is that of Isoamylase SU1, chloroplastic from Zea mays (Maize).